Here is a 449-residue protein sequence, read N- to C-terminus: MGNHYIPNSAHKEEMLKEIGLSSIEELFADIPEKFIKEELNLPEGKSEYEVFLEMNEILEKNKTVLEMPTFLGAGTYFHYIPAHVKHLIERSEFLTSYTPYQPEISQGMLQALFEYQSLIAELVGLPVVNSSMYDWGTAMAEAALMTVRLHKGKRKKFVVPKHTHPERLQVLRTYTRGPEVEIVTVNWNERGQVDVEDLKEKVKDAAGVYIEIPNFFGLLEEEIREVGEIAHEAGAYFVVGVDPTILGIVEAPGELGADIVVGEASYFGNPMNFGGPRAGIFAVKNDMKLIRQMPGRIIGMTKDAEGKRAFVMTLQTREQHIRRAKATSNICSNEALVAVAAAIHIASLGPKGIRELGEVILKNTAYLKKRLSEVAEIPFDGVNFKDVLVRFDKPYREIHEELLKRNIHGGYYVGSHFPELGEAALFAATETTRKEWVDALISALKEVI.

Belongs to the GcvP family. N-terminal subunit subfamily. The glycine cleavage system is composed of four proteins: P, T, L and H. In this organism, the P 'protein' is a heterodimer of two subunits.

It catalyses the reaction N(6)-[(R)-lipoyl]-L-lysyl-[glycine-cleavage complex H protein] + glycine + H(+) = N(6)-[(R)-S(8)-aminomethyldihydrolipoyl]-L-lysyl-[glycine-cleavage complex H protein] + CO2. Its function is as follows. The glycine cleavage system catalyzes the degradation of glycine. The P protein binds the alpha-amino group of glycine through its pyridoxal phosphate cofactor; CO(2) is released and the remaining methylamine moiety is then transferred to the lipoamide cofactor of the H protein. The chain is Probable glycine dehydrogenase (decarboxylating) subunit 1 from Pyrococcus horikoshii (strain ATCC 700860 / DSM 12428 / JCM 9974 / NBRC 100139 / OT-3).